We begin with the raw amino-acid sequence, 1070 residues long: Potassium/chloride cotransporter 3 (1070 aa).

15 consecutive transmembrane segments (helical) span residues 92–112, 114–134, 142–162, 174–194, 196–216, 228–248, 251–271, 400–420, 433–453, 473–493, 534–554, 557–577, 600–620, 791–811, and 827–847; these read GVML…TMFI, LFWV…AICC, ISLS…YFII, VGIL…VGGV, VILM…LHDT, LYGT…VKFV, LAPV…GGGI, FFML…GTNM, VGTI…AILF, TMVV…GAFL, PFLG…LGAV, IAEV…LIAV, LLGA…LACI, LVLF…LIVT, and FIDI…AYLL.

As to expression, expressed in the amphid sheath glia and the cephalic sheath glia. Also expressed in the inner labial and outer labial sheath and socket glia and as well as phasmid sheath glia.

The protein resides in the cell membrane. Functionally, probable potassium/chloride cotransporter that functions in the amphid sheath glial cells to regulate thermotaxis behavior. By maintaining chloride homeostasis, negatively regulates guanylate cyclase gcy-8 in the thermosensory AFD neurons and thereby controls the microvilli receptive ending morphology of the AFD neurons and thermotaxis. Modulates the temperature-evoked neuronal activity of the AFD neurons such as calcium responses to temperature gradients. Might also play a role in the chemotaxis behavior mediated by the sensory neurons AWA and AWC. The polypeptide is Potassium/chloride cotransporter 3 (kcc-3) (Caenorhabditis elegans).